A 139-amino-acid chain; its full sequence is Actin-depolymerizing factor 1 (139 aa).

Residues 5–139 (SSGLAVNDEC…SLDIVRSRTN (135 aa)) enclose the ADF-H domain.

This sequence belongs to the actin-binding proteins ADF family. As to expression, expressed in pollen.

Actin-depolymerizing protein. Severs actin filaments (F-actin) and binds to actin monomers. In Zea mays (Maize), this protein is Actin-depolymerizing factor 1 (ADF1).